Reading from the N-terminus, the 487-residue chain is Malonate-semialdehyde dehydrogenase 2 (487 aa).

Residues phenylalanine 154, lysine 178, glutamate 181, arginine 182, and serine 231 each contribute to the NAD(+) site. Cysteine 286 functions as the Nucleophile in the catalytic mechanism. Glutamate 386 contributes to the NAD(+) binding site.

Belongs to the aldehyde dehydrogenase family. IolA subfamily. Homotetramer.

The catalysed reaction is 3-oxopropanoate + NAD(+) + CoA + H2O = hydrogencarbonate + acetyl-CoA + NADH + H(+). It carries out the reaction 2-methyl-3-oxopropanoate + NAD(+) + CoA + H2O = propanoyl-CoA + hydrogencarbonate + NADH + H(+). The protein operates within polyol metabolism; myo-inositol degradation into acetyl-CoA; acetyl-CoA from myo-inositol: step 7/7. In terms of biological role, catalyzes the oxidation of malonate semialdehyde (MSA) and methylmalonate semialdehyde (MMSA) into acetyl-CoA and propanoyl-CoA, respectively. Is involved in a myo-inositol catabolic pathway. Bicarbonate, and not CO2, is the end-product of the enzymatic reaction. In Bacillus anthracis, this protein is Malonate-semialdehyde dehydrogenase 2.